The following is a 2375-amino-acid chain: Talin-2 (2375 aa).

The region spanning 88–406 is the FERM domain; the sequence is RPQKIRMLDG…GYIDIILKKK (319 aa). An interaction with PIP5K1C region spans residues 312–406; sequence GVSFFLVKEK…GYIDIILKKK (95 aa). A phosphoserine mark is found at Ser428, Ser450, Ser624, and Ser1024. Tyr1666 is modified (phosphotyrosine). An I/LWEQ domain is found at 2205–2375; sequence TEWVDPEDPT…KRLQAAGNAV (171 aa).

In terms of assembly, interacts directly with PIP5K1C.

The protein resides in the cytoplasm. It localises to the cell junction. It is found in the focal adhesion. The protein localises to the synapse. Its subcellular location is the cell membrane. The protein resides in the cytoskeleton. Its function is as follows. As a major component of focal adhesion plaques that links integrin to the actin cytoskeleton, may play an important role in cell adhesion. Recruits PIP5K1C to focal adhesion plaques and strongly activates its kinase activity. This chain is Talin-2 (Tln2), found in Mus musculus (Mouse).